Here is a 186-residue protein sequence, read N- to C-terminus: CASP-like protein 4C2 (186 aa).

The Cytoplasmic segment spans residues 1–31; the sequence is MRSPQPHRSGGDTQQHFQSTVSVQKLKRFNS. Residues 32–52 traverse the membrane as a helical segment; sequence LILVFRFAAFCFSLASAVFML. The Extracellular segment spans residues 53 to 71; it reads TNSRGSDSLHWYNFDAFRY. Residues 72–92 traverse the membrane as a helical segment; sequence VFAANAIVAIYSLFEMAASVW. Topologically, residues 93-103 are cytoplasmic; the sequence is EISRNATLFPE. The helical transmembrane segment at 104–124 threads the bilayer; the sequence is ICQVWFDFGHDQVFAYLLLSA. The Extracellular portion of the chain corresponds to 125-150; that stretch reads NTAGTELARTLKDTCTDNKAFCVQSD. The helical transmembrane segment at 151–171 threads the bilayer; sequence IAIVLGFAGFLFLGISSLFSG. The Cytoplasmic portion of the chain corresponds to 172 to 186; sequence FRVVCFIINGSRFYV.

The protein belongs to the Casparian strip membrane proteins (CASP) family. In terms of assembly, homodimer and heterodimers.

It localises to the cell membrane. This Populus trichocarpa (Western balsam poplar) protein is CASP-like protein 4C2.